Here is a 549-residue protein sequence, read N- to C-terminus: Myotubularin-related protein 9 (549 aa).

M1 bears the N-acetylmethionine mark. In terms of domain architecture, GRAM spans 4-99 (AELIKTPRVD…LNIASSIEAL (96 aa)). The Myotubularin phosphatase domain occupies 123-498 (GWHSFLPEQE…QSLQLWEGIF (376 aa)). Residues 508-542 (LDEAYEEMVNIIEYNKELQAKVNLLRRQLAELETE) adopt a coiled-coil conformation. The residue at position 548 (S548) is a Phosphoserine.

It belongs to the protein-tyrosine phosphatase family. Non-receptor class myotubularin subfamily. As to quaternary structure, homodimer. Heterodimer (via C-terminus) with lipid phosphatase MTMR6 (via C-terminus). Heterodimer (via coiled coil domain) with lipid phosphatase MTMR7 (via C-terminus). Heterodimer with lipid phosphatase MTMR8.

It is found in the cytoplasm. Its subcellular location is the cell projection. It localises to the ruffle membrane. The protein resides in the perinuclear region. The protein localises to the endoplasmic reticulum. In terms of biological role, acts as an adapter for myotubularin-related phosphatases. Increases lipid phosphatase MTMR6 catalytic activity, specifically towards phosphatidylinositol 3,5-bisphosphate, and MTMR6 binding affinity for phosphorylated phosphatidylinositols. Positively regulates lipid phosphatase MTMR7 catalytic activity. Increases MTMR8 catalytic activity towards phosphatidylinositol 3-phosphate. The formation of the MTMR6-MTMR9 complex, stabilizes both MTMR6 and MTMR9 protein levels. Stabilizes MTMR8 protein levels. Plays a role in the late stages of macropinocytosis possibly by regulating MTMR6-mediated dephosphorylation of phosphatidylinositol 3-phosphate in membrane ruffles. Negatively regulates autophagy, in part via its association with MTMR8. Negatively regulates DNA damage-induced apoptosis, in part via its association with MTMR6. Does not bind mono-, di- and tri-phosphorylated phosphatidylinositols, phosphatidic acid and phosphatidylserine. This is Myotubularin-related protein 9 (MTMR9) from Bos taurus (Bovine).